The chain runs to 554 residues: Solute carrier family 22 member 2 (554 aa).

Residues 1-21 (MPTVDDILEQVGHFHFFQKQT) are Cytoplasmic-facing. The chain crosses the membrane as a helical span at residues 22 to 42 (FFLLALISAAFTPIYVGIVFL). The Extracellular portion of the chain corresponds to 43 to 149 (GFTPDHRCRS…LVCARSWMLD (107 aa)). N71 carries N-linked (GlcNAc...) asparagine glycosylation. The chain crosses the membrane as a helical span at residues 150-170 (LFQSAVNIGFFIGSVGIGYLA). The Cytoplasmic segment spans residues 171 to 176 (DRFGRK). A helical transmembrane segment spans residues 177–197 (LCLLVTILINAAAGVLMAVSP). The N-linked (GlcNAc...) asparagine glycan is linked to N198. The Extracellular segment spans residues 198 to 209 (NYTWMLIFRLIQ). A helical transmembrane segment spans residues 210–230 (GLVSKAGWLIGYILITEFVGL). The Cytoplasmic portion of the chain corresponds to 231–237 (NYRRTVG). A helical membrane pass occupies residues 238–258 (ILYQVAFTVGLLVLAGVAYAL). Over 259 to 262 (PRWR) the chain is Extracellular. A helical membrane pass occupies residues 263 to 283 (WLQLTVTLPYFCFLLYYWCIP). A Proline-rich sequence motif is present at residues 283-287 (PESPR). Topologically, residues 284–348 (ESPRWLISQN…RTPQIRKHTC (65 aa)) are cytoplasmic. A helical membrane pass occupies residues 349-369 (ILMYNWFTSSVLYQGLIMHLG). Over 370–374 (LAGGD) the chain is Extracellular. A helical membrane pass occupies residues 375–395 (IYLDFFYSALVEFPAAFLIIA). Over 396–403 (TIDRVGRR) the chain is Cytoplasmic. Residues 404–424 (YPWAVSNMVAGAACLASVFVP) traverse the membrane as a helical segment. Topologically, residues 425–427 (DDL) are extracellular. The helical transmembrane segment at 428–450 (QGLRITVACLGRMGITMAYEMVC) threads the bilayer. Residues 451 to 463 (LVNAELYPTFIRN) are Cytoplasmic-facing. A helical membrane pass occupies residues 464-484 (LGVLVCSSLCDVGGIVTPFLV). Over 485 to 493 (YRLTAIWLQ) the chain is Extracellular. A helical membrane pass occupies residues 494 to 514 (LPLVVFAVVGLVAGGLVLMLP). The Cytoplasmic portion of the chain corresponds to 515-554 (ETKGRTLPETIEEAENLQRPRKNREKVIYVHVRKADGPLT).

It belongs to the major facilitator (TC 2.A.1) superfamily. Organic cation transporter (TC 2.A.1.19) family. Tyrosine phosphorylated. Expressed in kidney.

It localises to the basolateral cell membrane. Its subcellular location is the basal cell membrane. The catalysed reaction is (R)-noradrenaline(out) = (R)-noradrenaline(in). The enzyme catalyses (R)-adrenaline(out) = (R)-adrenaline(in). It carries out the reaction serotonin(out) = serotonin(in). It catalyses the reaction dopamine(out) = dopamine(in). The catalysed reaction is histamine(out) = histamine(in). The enzyme catalyses thiamine(in) = thiamine(out). It carries out the reaction creatinine(in) = creatinine(out). It catalyses the reaction 1-methylnicotinamide(out) = 1-methylnicotinamide(in). The catalysed reaction is guanidine(out) = guanidine(in). The enzyme catalyses choline(out) = choline(in). It carries out the reaction agmatine(out) = agmatine(in). It catalyses the reaction putrescine(out) = putrescine(in). The catalysed reaction is spermidine(in) = spermidine(out). The enzyme catalyses tyramine(in) = tyramine(out). It carries out the reaction L-histidyl-L-proline diketopiperazine(in) = L-histidyl-L-proline diketopiperazine(out). It catalyses the reaction (R)-salsolinol(in) = (R)-salsolinol(out). The catalysed reaction is N-methyl-(R)-salsolinol(in) = N-methyl-(R)-salsolinol(out). The enzyme catalyses acetylcholine(in) = acetylcholine(out). It carries out the reaction prostaglandin F2alpha(out) = prostaglandin F2alpha(in). It catalyses the reaction prostaglandin E2(out) = prostaglandin E2(in). Its activity is regulated as follows. Tyrosine phosphorylation of the transporter leads to activation of the transport activity. Inhibited by cGMP, most likely through a cGMP-binding protein that interacts with OCT2. Electrogenic voltage-dependent transporter that mediates the transport of a variety of organic cations such as endogenous bioactive amines, cationic drugs and xenobiotics. Functions as a Na(+)-independent, bidirectional uniporter. Cation cellular uptake or release is driven by the electrochemical potential, i.e. membrane potential and concentration gradient. However, may also engage electroneutral cation exchange when saturating concentrations of cation substrates are reached. Predominantly expressed at the basolateral membrane of hepatocytes and proximal tubules and involved in the uptake and disposition of cationic compounds by hepatic and renal clearance from the blood flow. Implicated in monoamine neurotransmitters uptake such as histamine, dopamine, adrenaline/epinephrine, noradrenaline/norepinephrine, serotonin and tyramine, thereby supporting a physiological role in the central nervous system by regulating interstitial concentrations of neurotransmitters. Also capable of transporting dopaminergic neuromodulators cyclo(his-pro), salsolinol and N-methyl-salsolinol, thereby involved in the maintenance of dopaminergic cell integrity in the central nervous system. Mediates the bidirectional transport of acetylcholine (ACh) at the apical membrane of ciliated cell in airway epithelium, thereby playing a role in luminal release of ACh from bronchial epithelium. Also transports guanidine and endogenous monoamines such as vitamin B1/thiamine, creatinine and N-1-methylnicotinamide (NMN). Mediates the uptake and efflux of quaternary ammonium compound choline. Mediates the bidirectional transport of polyamine agmatine and the uptake of polyamines putrescine and spermidine. Able to transport non-amine endogenous compounds such as prostaglandin E2 (PGE2) and prostaglandin F2-alpha (PGF2-alpha). Also involved in the uptake of xenobiotic 4-(4-(dimethylamino)styryl)-N-methylpyridinium (ASP). May contribute to regulate the transport of organic compounds in testis across the blood-testis-barrier. This Oryctolagus cuniculus (Rabbit) protein is Solute carrier family 22 member 2 (SLC22A2).